We begin with the raw amino-acid sequence, 138 residues long: ATP synthase epsilon chain (138 aa).

It belongs to the ATPase epsilon chain family. In terms of assembly, F-type ATPases have 2 components, CF(1) - the catalytic core - and CF(0) - the membrane proton channel. CF(1) has five subunits: alpha(3), beta(3), gamma(1), delta(1), epsilon(1). CF(0) has three main subunits: a, b and c.

The protein localises to the cell inner membrane. Produces ATP from ADP in the presence of a proton gradient across the membrane. The sequence is that of ATP synthase epsilon chain from Wigglesworthia glossinidia brevipalpis.